A 678-amino-acid chain; its full sequence is DNA ligase (678 aa).

Residues 47–51 (DSDYD), 96–97 (SL), and Glu122 each bind NAD(+). Lys124 acts as the N6-AMP-lysine intermediate in catalysis. NAD(+)-binding residues include Arg145, Glu182, Lys300, and Lys324. 4 residues coordinate Zn(2+): Cys418, Cys421, Cys436, and Cys442. The 77-residue stretch at 602–678 (AYNESFTGKT…ILEDNLKDLL (77 aa)) folds into the BRCT domain.

This sequence belongs to the NAD-dependent DNA ligase family. LigA subfamily. The cofactor is Mg(2+). Mn(2+) is required as a cofactor.

It catalyses the reaction NAD(+) + (deoxyribonucleotide)n-3'-hydroxyl + 5'-phospho-(deoxyribonucleotide)m = (deoxyribonucleotide)n+m + AMP + beta-nicotinamide D-nucleotide.. Its function is as follows. DNA ligase that catalyzes the formation of phosphodiester linkages between 5'-phosphoryl and 3'-hydroxyl groups in double-stranded DNA using NAD as a coenzyme and as the energy source for the reaction. It is essential for DNA replication and repair of damaged DNA. This is DNA ligase from Francisella tularensis subsp. holarctica (strain OSU18).